Reading from the N-terminus, the 122-residue chain is Large ribosomal subunit protein uL14 (122 aa).

The protein belongs to the universal ribosomal protein uL14 family. As to quaternary structure, part of the 50S ribosomal subunit. Forms a cluster with proteins L3 and L19. In the 70S ribosome, L14 and L19 interact and together make contacts with the 16S rRNA in bridges B5 and B8.

Its function is as follows. Binds to 23S rRNA. Forms part of two intersubunit bridges in the 70S ribosome. In Picosynechococcus sp. (strain ATCC 27264 / PCC 7002 / PR-6) (Agmenellum quadruplicatum), this protein is Large ribosomal subunit protein uL14.